Consider the following 970-residue polypeptide: UvrABC system protein A (970 aa).

Residue 34–41 (GVSGSGKS) participates in ATP binding. The C4-type zinc finger occupies 284–311 (CPEHGAVMDELSPRLFSFNSPYGACPDC). 2 ABC transporter domains span residues 340-617 (WSEK…QRSL) and 637-965 (GNGA…KYLA). Position 669–676 (669–676 (GVSGSGKS)) interacts with ATP. A C4-type zinc finger spans residues 768-794 (CEACAGQGVNVIEMNFLPDVYVQCDVC).

It belongs to the ABC transporter superfamily. UvrA family. In terms of assembly, forms a heterotetramer with UvrB during the search for lesions.

It localises to the cytoplasm. The UvrABC repair system catalyzes the recognition and processing of DNA lesions. UvrA is an ATPase and a DNA-binding protein. A damage recognition complex composed of 2 UvrA and 2 UvrB subunits scans DNA for abnormalities. When the presence of a lesion has been verified by UvrB, the UvrA molecules dissociate. This Synechocystis sp. (strain ATCC 27184 / PCC 6803 / Kazusa) protein is UvrABC system protein A.